We begin with the raw amino-acid sequence, 356 residues long: DNA polymerase IV (356 aa).

The UmuC domain maps to 7 to 188 (IIHIDMDAFY…IPVTKFYGVG (182 aa)). Mg(2+) is bound by residues Asp11 and Asp106. The active site involves Glu107.

The protein belongs to the DNA polymerase type-Y family. As to quaternary structure, monomer. Mg(2+) serves as cofactor.

Its subcellular location is the cytoplasm. It carries out the reaction DNA(n) + a 2'-deoxyribonucleoside 5'-triphosphate = DNA(n+1) + diphosphate. Its function is as follows. Poorly processive, error-prone DNA polymerase involved in untargeted mutagenesis. Copies undamaged DNA at stalled replication forks, which arise in vivo from mismatched or misaligned primer ends. These misaligned primers can be extended by PolIV. Exhibits no 3'-5' exonuclease (proofreading) activity. May be involved in translesional synthesis, in conjunction with the beta clamp from PolIII. In Listeria welshimeri serovar 6b (strain ATCC 35897 / DSM 20650 / CCUG 15529 / CIP 8149 / NCTC 11857 / SLCC 5334 / V8), this protein is DNA polymerase IV.